Reading from the N-terminus, the 167-residue chain is uncharacterized protein (167 aa).

The chain crosses the membrane as a helical span at residues 4-24 (IIGLFFIIILIVINISILAYD).

The protein resides in the membrane. This is an uncharacterized protein from Rickettsia prowazekii (strain Madrid E).